We begin with the raw amino-acid sequence, 187 residues long: EP300-interacting inhibitor of differentiation 1 (187 aa).

Residues 1 to 118 (MSEMAELSEL…YDYPEEEQLS (118 aa)) are disordered. Composition is skewed to acidic residues over residues 52–63 (LEEEGPMEEEEA) and 93–116 (FESE…EEEQ). The interaction with NR0B2 stretch occupies residues 54–120 (EEGPMEEEEA…YPEEEQLSGA (67 aa)). Residues 178–182 (LGCDE) carry the LXCXE motif motif.

As to quaternary structure, interacts via its LXCXE motif with the entire pocket region of RB1. Interacts with EP300, NR0B2 and TRIM27. In terms of processing, ubiquitinated in U2OS osteosarcoma cells and is rapidly degraded by proteasome as cells exit the cell cycle exit. Widely expressed. Most abundantly expressed in heart, skeletal muscle, pancreas, brain and testis. Expressed at much lower levels in placenta and peripheral blood leukocyte. Barely detectable in lung. Also weakly expressed in lung carcinoma A-549 and various leukemia cell lines.

It localises to the nucleus. The protein localises to the cytoplasm. Functionally, interacts with RB1 and EP300 and acts as a repressor of MYOD1 transactivation. Inhibits EP300 and CBP histone acetyltransferase activity. May be involved in coupling cell cycle exit to the transcriptional activation of genes required for cellular differentiation. May act as a candidate coinhibitory factor for NR0B2 that can be directly linked to transcription inhibitory mechanisms. The polypeptide is EP300-interacting inhibitor of differentiation 1 (Homo sapiens (Human)).